Consider the following 307-residue polypeptide: Ornithine carbamoyltransferase (307 aa).

Carbamoyl phosphate is bound by residues 54–57 (STRT), glutamine 81, arginine 105, and 132–135 (HPCQ). L-ornithine contacts are provided by residues asparagine 163, aspartate 221, and 225 to 226 (SM). Residues 261-262 (CL) and arginine 289 each bind carbamoyl phosphate.

This sequence belongs to the aspartate/ornithine carbamoyltransferase superfamily. OTCase family.

Its subcellular location is the cytoplasm. It catalyses the reaction carbamoyl phosphate + L-ornithine = L-citrulline + phosphate + H(+). The protein operates within amino-acid biosynthesis; L-arginine biosynthesis; L-arginine from L-ornithine and carbamoyl phosphate: step 1/3. In terms of biological role, reversibly catalyzes the transfer of the carbamoyl group from carbamoyl phosphate (CP) to the N(epsilon) atom of ornithine (ORN) to produce L-citrulline. The chain is Ornithine carbamoyltransferase from Aromatoleum aromaticum (strain DSM 19018 / LMG 30748 / EbN1) (Azoarcus sp. (strain EbN1)).